Here is a 193-residue protein sequence, read N- to C-terminus: Outer membrane lipoprotein DolP (193 aa).

Residues 1–21 (MTLSPLKKLAILLGATIFLQG) form the signal peptide. A lipid anchor (N-palmitoyl cysteine) is attached at Cys-22. A lipid anchor (S-diacylglycerol cysteine) is attached at Cys-22. BON domains lie at 48-117 (DDET…TVSP) and 126-193 (KDSW…KYLD).

It belongs to the lipoprotein DolP family.

The protein localises to the cell outer membrane. In terms of biological role, plays an important role in maintaining outer membrane integrity. The chain is Outer membrane lipoprotein DolP from Haemophilus influenzae (strain ATCC 51907 / DSM 11121 / KW20 / Rd).